The sequence spans 98 residues: NADH-ubiquinone oxidoreductase chain 4L (98 aa).

3 helical membrane passes run 1-21, 29-49, and 61-81; these read MSLV…GLLM, SLLC…IMIL, and IILL…LVMV.

Belongs to the complex I subunit 4L family. In terms of assembly, core subunit of respiratory chain NADH dehydrogenase (Complex I) which is composed of 45 different subunits.

Its subcellular location is the mitochondrion inner membrane. It catalyses the reaction a ubiquinone + NADH + 5 H(+)(in) = a ubiquinol + NAD(+) + 4 H(+)(out). Its function is as follows. Core subunit of the mitochondrial membrane respiratory chain NADH dehydrogenase (Complex I) which catalyzes electron transfer from NADH through the respiratory chain, using ubiquinone as an electron acceptor. Part of the enzyme membrane arm which is embedded in the lipid bilayer and involved in proton translocation. This is NADH-ubiquinone oxidoreductase chain 4L (MT-ND4L) from Mogera wogura (Japanese mole).